A 118-amino-acid polypeptide reads, in one-letter code: Ribosome-binding factor A (118 aa).

Belongs to the RbfA family. In terms of assembly, monomer. Binds 30S ribosomal subunits, but not 50S ribosomal subunits or 70S ribosomes.

It localises to the cytoplasm. One of several proteins that assist in the late maturation steps of the functional core of the 30S ribosomal subunit. Associates with free 30S ribosomal subunits (but not with 30S subunits that are part of 70S ribosomes or polysomes). Required for efficient processing of 16S rRNA. May interact with the 5'-terminal helix region of 16S rRNA. The protein is Ribosome-binding factor A of Bacillus cereus (strain ATCC 10987 / NRS 248).